A 382-amino-acid polypeptide reads, in one-letter code: Neuropeptide Y receptor type 1 (382 aa).

At 1-33 (MNSTLFSRVENYSVHYNVSENSPFLAFENDDCH) the chain is on the extracellular side. 3 N-linked (GlcNAc...) asparagine glycosylation sites follow: N2, N11, and N17. The helical transmembrane segment at 34 to 54 (LPLAVIFTLALAYGAVIILGV) threads the bilayer. The Cytoplasmic portion of the chain corresponds to 55-75 (SGNLALIIIILKQKEMRNVTN). Residues 76-96 (ILIVNLSFSDLLVAVMCLPFT) traverse the membrane as a helical segment. Topologically, residues 97–115 (FVYTLMDHWVFGETMCKLN) are extracellular. Residues C112 and C197 are joined by a disulfide bond. The chain crosses the membrane as a helical span at residues 116-136 (PFVQCVSITVSIFSLVLIAVE). Topologically, residues 137–153 (RHQLIINPRGWRPNNRH) are cytoplasmic. A helical transmembrane segment spans residues 154–174 (AYIGITVIWVLAVASSLPFVI). Over 175 to 210 (YQILTDEPFQNVSLAAFKDKYVCFDKFPSDSHRLSY) the chain is Extracellular. The chain crosses the membrane as a helical span at residues 211-231 (TTLLLVLQYFGPLCFIFICYF). Residues 232–259 (KIYIRLKRRNNMMDKIRDSKYRSSETKR) are Cytoplasmic-facing. A helical membrane pass occupies residues 260 to 280 (INVMLLSIVVAFAVCWLPLTI). Residues 281-298 (FNTVFDWNHQIIATCNHN) are Extracellular-facing. A helical membrane pass occupies residues 299–319 (LLFLLCHLTAMISTCVNPIFY). Over 320–382 (GFLNKNFQRD…KISMNDNEKI (63 aa)) the chain is Cytoplasmic. A lipid anchor (S-palmitoyl cysteine) is attached at C337. Phosphoserine occurs at positions 367 and 375.

This sequence belongs to the G-protein coupled receptor 1 family. As to expression, brain.

It is found in the cell membrane. Receptor for neuropeptide Y and peptide YY. In Rattus norvegicus (Rat), this protein is Neuropeptide Y receptor type 1 (Npy1r).